The following is a 584-amino-acid chain: Cation channel sperm-associated protein 2 (584 aa).

Over 1–106 (MAHERGHLQL…LWAGWVLDSS (106 aa)) the chain is Cytoplasmic. A helical membrane pass occupies residues 107–129 (IFSNFIISLIFLNTFVLMVEIEL). At 130 to 138 (MNSTNTSLW) the chain is on the extracellular side. The chain crosses the membrane as a helical span at residues 139-164 (PLKLALEVTDWFILLSFIVEILLMWL). Over 165 to 173 (ASFFLFWKN) the chain is Cytoplasmic. A helical membrane pass occupies residues 174–198 (AWSVFDFVVTMLSLLPEFVVLIGVS). The Extracellular portion of the chain corresponds to 199–201 (ADS). Residues 202–220 (VWLQLLRVSRVLRSLKLFA) form a helical membrane-spanning segment. Residues 221-237 (RFPQIKVILLALVRALK) lie on the Cytoplasmic side of the membrane. The chain crosses the membrane as a helical span at residues 238-260 (SMTFLLMLLLIFFYVFAVAGVYF). Over 261-279 (FKEYSRSTIENLEYNMFFS) the chain is Extracellular. Positions 280-292 (DLLNSLVTVFILF) form an intramembrane region, helical; Pore-forming. Residues 293 to 312 (TLDHWYAVLQDVWKVPEASR) lie on the Extracellular side of the membrane. A helical transmembrane segment spans residues 313 to 339 (VFSSIYVILWLLLGSIIFRNIIVAMMV). Residues 340–584 (TNFQNIRNEL…VQALMNFEDK (245 aa)) are Cytoplasmic-facing. Residues 376–386 (SESLRGTSQGK) are compositionally biased toward polar residues. 2 disordered regions span residues 376–460 (SESL…KGYT) and 480–510 (AGKAENEKVQKELKEKAYPGSPPNSSSHDEA). 2 stretches are compositionally biased toward acidic residues: residues 390-418 (DITETSEATDEEKSEAEESEEEKSEEEKS) and 426-443 (EKNDEEKSDEEENDEEKS). Basic and acidic residues-rich tracts occupy residues 444-460 (DVEKSDEEKNDEEKGYT) and 483-496 (AENEKVQKELKEKA).

It belongs to the cation channel sperm-associated (TC 1.A.1.19) family. In terms of assembly, component of the CatSper complex or CatSpermasome composed of the core pore-forming members CATSPER1, CATSPER2, CATSPER3 and CATSPER4 as well as auxiliary members CATSPERB, CATSPERG, CATSPERD, CATSPERE, CATSPERZ, C2CD6/CATSPERT, SLCO6C1, TMEM249, TMEM262 and EFCAB9. HSPA1 may be an additional auxiliary complex member. The core complex members CATSPER1, CATSPER2, CATSPER3 and CATSPER4 form a heterotetrameric channel. The auxiliary CATSPERB, CATSPERG, CATSPERD and CATSPERE subunits form a pavilion-like structure over the pore which stabilizes the complex through interactions with CATSPER4, CATSPER3, CATSPER1 and CATSPER2 respectively. SLCO6C1 interacts with CATSPERE and TMEM262/CATSPERH interacts with CATSPERB, further stabilizing the complex. C2CD6/CATSPERT interacts at least with CATSPERD and is required for targeting the CatSper complex in the flagellar membrane. Interacts with Ca(v)3.3/CACNA1I, leading to suppression of T-type calcium channel activity.

The protein resides in the cell projection. The protein localises to the cilium. It is found in the flagellum membrane. It carries out the reaction Ca(2+)(in) = Ca(2+)(out). Its activity is regulated as follows. Activated by intracellular alkalinization. Its function is as follows. Pore-forming subunit of the CatSper complex, a sperm-specific voltage-gated calcium channel that plays a central role in sperm cell hyperactivation. Controls calcium entry to mediate the hyperactivated motility, a step needed for sperm motility which is essential late in the preparation of sperm for fertilization. This chain is Cation channel sperm-associated protein 2 (Catsper2), found in Rattus norvegicus (Rat).